The primary structure comprises 146 residues: VQWSDSERTIINGIFSQLDYDDLGPKAFSRCLIVYPWTQRYFSSFGNLDNAEAIMGNANVAAHGIKVLHGLDRGVKNMDDIMGVYAELSSLHSEKLHVDPDNFKLLSDCITIVVAAKLGNAFTPETQAAFQKFLGAVVMFLGKQYH.

Positions 2-146 (QWSDSERTII…VVMFLGKQYH (145 aa)) constitute a Globin domain. The heme b site is built by His-63 and His-92.

Belongs to the globin family. As to quaternary structure, heterotetramer of two alpha chains and two beta chains. In terms of tissue distribution, red blood cells.

Functionally, involved in oxygen transport from the lung to the various peripheral tissues. In Artedidraco orianae (Barbeled plunderfish), this protein is Hemoglobin subunit beta (hbb).